The sequence spans 110 residues: UPF0060 membrane protein Francci3_2786 (110 aa).

Transmembrane regions (helical) follow at residues 8–28 (LLFV…WQGV), 33–53 (GPVW…VATL), 62–82 (ILAA…VAVD), and 87–107 (DRYD…IMYA).

Belongs to the UPF0060 family.

The protein resides in the cell membrane. The chain is UPF0060 membrane protein Francci3_2786 from Frankia casuarinae (strain DSM 45818 / CECT 9043 / HFP020203 / CcI3).